The sequence spans 550 residues: Endonuclease/exonuclease/phosphatase family domain-containing protein 1 (550 aa).

Residues 39-68 (ERLNINTATEEELMTLPGVNRGVAQNIVEY) form the HhH domain. Positions 194–213 (STNTNGGFTHPSPTSFSVQS) are enriched in polar residues. Residues 194–216 (STNTNGGFTHPSPTSFSVQSDEP) form a disordered region.

This is Endonuclease/exonuclease/phosphatase family domain-containing protein 1 (eepd1) from Danio rerio (Zebrafish).